We begin with the raw amino-acid sequence, 222 residues long: uncharacterized protein (222 aa).

A helical membrane pass occupies residues 7–26; sequence ICLVSLICISGIYFGYQYYQ. The SPOR domain maps to 139–222; the sequence is CRSNAGYKVQ…AYNKQSCVLK (84 aa).

Its subcellular location is the membrane. This is an uncharacterized protein from Rickettsia prowazekii (strain Madrid E).